A 276-amino-acid polypeptide reads, in one-letter code: Diaminopimelate epimerase (276 aa).

Substrate-binding residues include asparagine 13, glutamine 46, and asparagine 66. Cysteine 75 functions as the Proton donor in the catalytic mechanism. Substrate contacts are provided by residues 76–77, asparagine 159, asparagine 192, and 210–211; these read GN and ER. The active-site Proton acceptor is cysteine 219. 220-221 serves as a coordination point for substrate; sequence GT.

This sequence belongs to the diaminopimelate epimerase family. Homodimer.

Its subcellular location is the cytoplasm. The catalysed reaction is (2S,6S)-2,6-diaminopimelate = meso-2,6-diaminopimelate. It participates in amino-acid biosynthesis; L-lysine biosynthesis via DAP pathway; DL-2,6-diaminopimelate from LL-2,6-diaminopimelate: step 1/1. Functionally, catalyzes the stereoinversion of LL-2,6-diaminopimelate (L,L-DAP) to meso-diaminopimelate (meso-DAP), a precursor of L-lysine and an essential component of the bacterial peptidoglycan. The protein is Diaminopimelate epimerase of Pseudomonas fluorescens (strain Pf0-1).